Reading from the N-terminus, the 439-residue chain is Serine hydroxymethyltransferase (439 aa).

Residues Met-1–Thr-20 are disordered. Residues Leu-136 and Gly-140–Leu-142 contribute to the (6S)-5,6,7,8-tetrahydrofolate site. Position 245 is an N6-(pyridoxal phosphate)lysine (Lys-245).

It belongs to the SHMT family. In terms of assembly, homodimer. Pyridoxal 5'-phosphate serves as cofactor.

The protein localises to the cytoplasm. The enzyme catalyses (6R)-5,10-methylene-5,6,7,8-tetrahydrofolate + glycine + H2O = (6S)-5,6,7,8-tetrahydrofolate + L-serine. Its pathway is one-carbon metabolism; tetrahydrofolate interconversion. The protein operates within amino-acid biosynthesis; glycine biosynthesis; glycine from L-serine: step 1/1. Catalyzes the reversible interconversion of serine and glycine with tetrahydrofolate (THF) serving as the one-carbon carrier. This reaction serves as the major source of one-carbon groups required for the biosynthesis of purines, thymidylate, methionine, and other important biomolecules. Also exhibits THF-independent aldolase activity toward beta-hydroxyamino acids, producing glycine and aldehydes, via a retro-aldol mechanism. The chain is Serine hydroxymethyltransferase from Jannaschia sp. (strain CCS1).